Reading from the N-terminus, the 586-residue chain is Probable lysosomal cobalamin transporter (586 aa).

9 consecutive transmembrane segments (helical) span residues 10–30, 47–67, 96–116, 147–167, 191–211, 315–335, 378–398, 420–440, and 509–529; these read IWIAYAVAVGLALFAAIVTTF, VVSLTSLLATVLLLPVDIALV, IVYYSLYSLDALLCLIVIPFA, SGFIILVLILFFVGFFVPAAG, ALTFAVGLLVCLGTLLYVLYT, LVGGILLLLVSVIVWVSMLIT, IIMAFLVLFFFSSSISGLATV, ILIATVMMALIILGINYSIAM, and VFGAVDFWAQVAFLAVFLIVL. Asparagine 540 carries an N-linked (GlcNAc...) asparagine glycan.

The protein belongs to the LIMR family. LMBRD1 subfamily.

It localises to the lysosome membrane. In terms of biological role, probable lysosomal cobalamin transporter. Required to export cobalamin from lysosomes allowing its conversion to cofactors. This chain is Probable lysosomal cobalamin transporter, found in Pyricularia oryzae (strain 70-15 / ATCC MYA-4617 / FGSC 8958) (Rice blast fungus).